We begin with the raw amino-acid sequence, 229 residues long: Cytidylate kinase (229 aa).

12-20 (GPSGAGKGT) lines the ATP pocket.

The protein belongs to the cytidylate kinase family. Type 1 subfamily.

The protein localises to the cytoplasm. It carries out the reaction CMP + ATP = CDP + ADP. The enzyme catalyses dCMP + ATP = dCDP + ADP. This is Cytidylate kinase from Pseudomonas aeruginosa (strain UCBPP-PA14).